Here is a 349-residue protein sequence, read N- to C-terminus: Selenide, water dikinase (349 aa).

Residue cysteine 17 is part of the active site. Residues lysine 20 and 48–50 (YFD) contribute to the ATP site. Aspartate 51 is a binding site for Mg(2+). ATP is bound by residues aspartate 68, aspartate 91, and 139–141 (GHS). Aspartate 91 contacts Mg(2+). Aspartate 229 contributes to the Mg(2+) binding site.

Belongs to the selenophosphate synthase 1 family. Class I subfamily. Homodimer. Requires Mg(2+) as cofactor.

It carries out the reaction hydrogenselenide + ATP + H2O = selenophosphate + AMP + phosphate + 2 H(+). Synthesizes selenophosphate from selenide and ATP. This is Selenide, water dikinase from Nitrosomonas eutropha (strain DSM 101675 / C91 / Nm57).